Reading from the N-terminus, the 590-residue chain is Beta-(1--&gt;2)glucan export ATP-binding/permease protein NdvA (590 aa).

The region spanning 21 to 301 (VALICGANVA…MSAFANQISE (281 aa)) is the ABC transmembrane type-1 domain. The next 6 membrane-spanning stretches (helical) occupy residues 22–42 (ALICGANVALAAIAILEPIMF), 55–75 (VFSTLAVWAGLGAFNVIAFVL), 136–156 (QHLSTAVALVLLVPTALSMDV), 158–178 (MSMVLLGLGVLYVGIGRLVMK), 248–268 (LSSTISMMVVLLIGAYLVTHG), and 275–295 (VIAFTGFATLLISRLDQMSAF). The ABC transporter domain maps to 335–569 (VRFEDVGFEF…NGRFASLLRA (235 aa)). Position 368–375 (368–375 (GPTGAGKT)) interacts with ATP.

It belongs to the ABC transporter superfamily. Beta-(1--&gt;2)glucan exporter (TC 3.A.1.108.1) family. As to quaternary structure, homodimer.

It localises to the cell inner membrane. It carries out the reaction [(1-&gt;2)-beta-D-glucosyl](n)(in) + ATP + H2O = [(1-&gt;2)-beta-D-glucosyl](n)(out) + ADP + phosphate + H(+). Functionally, involved in beta-(1--&gt;2)glucan export. Transmembrane domains (TMD) form a pore in the inner membrane and the ATP-binding domain (NBD) is responsible for energy generation. This is Beta-(1--&gt;2)glucan export ATP-binding/permease protein NdvA from Mesorhizobium japonicum (strain LMG 29417 / CECT 9101 / MAFF 303099) (Mesorhizobium loti (strain MAFF 303099)).